Here is a 70-residue protein sequence, read N- to C-terminus: uncharacterized protein (70 aa).

Residues 50–70 (FYLLVFFIILWVSREAFFYLI) form a helical membrane-spanning segment.

This sequence belongs to the M.jannaschii MJ0023/MJ0349/MJ1072/MJ1074/MJ1107/MJECL16 family.

It localises to the membrane. This is an uncharacterized protein from Methanocaldococcus jannaschii (strain ATCC 43067 / DSM 2661 / JAL-1 / JCM 10045 / NBRC 100440) (Methanococcus jannaschii).